The primary structure comprises 335 residues: Protein FATTY ACID EXPORT 3, chloroplastic (335 aa).

Residues 1-72 (MMSIPMELMS…PEVLLNRSVV (72 aa)) constitute a chloroplast transit peptide. Residues 82–101 (GESGVEVGKEKSDIDVEDDT) form a disordered region. A compositionally biased stretch (basic and acidic residues) spans 88–101 (VGKEKSDIDVEDDT). Residues 101-160 (TSKEAWKQTLESFKEQVSKMQSVSSEAYSVNSQKAMTVLKETSEQLRIQAEKAKEELGTK) adopt a coiled-coil conformation. 3 helical membrane-spanning segments follow: residues 205–225 (FHVGIPYGLLLLVGGFINFMV), 228–248 (SIPAIRFGVILGGALFALSLA), and 286–306 (STFLGFFTTLTSGGVLGFYLY). Residues 316 to 335 (PTLEDGGEDESSDGFVRSEG) are disordered.

Belongs to the TMEM14 family.

The protein resides in the plastid. It is found in the chloroplast membrane. In terms of biological role, may be involved in free fatty acids export from the plastids. This Arabidopsis thaliana (Mouse-ear cress) protein is Protein FATTY ACID EXPORT 3, chloroplastic.